The chain runs to 423 residues: Phosphoribosylamine--glycine ligase (423 aa).

Residues 107 to 312 enclose the ATP-grasp domain; it reads KDLCARYGIP…LLPLLYAAAT (206 aa). Residue 133 to 193 participates in ATP binding; the sequence is IREEGAPIVI…EAYLDGEEAS (61 aa). Mg(2+)-binding residues include E282 and N284.

Belongs to the GARS family. Requires Mg(2+) as cofactor. The cofactor is Mn(2+).

The enzyme catalyses 5-phospho-beta-D-ribosylamine + glycine + ATP = N(1)-(5-phospho-beta-D-ribosyl)glycinamide + ADP + phosphate + H(+). The protein operates within purine metabolism; IMP biosynthesis via de novo pathway; N(1)-(5-phospho-D-ribosyl)glycinamide from 5-phospho-alpha-D-ribose 1-diphosphate: step 2/2. This is Phosphoribosylamine--glycine ligase from Rhizobium meliloti (strain 1021) (Ensifer meliloti).